A 252-amino-acid chain; its full sequence is Imidazole glycerol phosphate synthase subunit HisF (252 aa).

Residues Asp-11 and Asp-130 contribute to the active site.

This sequence belongs to the HisA/HisF family. Heterodimer of HisH and HisF.

Its subcellular location is the cytoplasm. The enzyme catalyses 5-[(5-phospho-1-deoxy-D-ribulos-1-ylimino)methylamino]-1-(5-phospho-beta-D-ribosyl)imidazole-4-carboxamide + L-glutamine = D-erythro-1-(imidazol-4-yl)glycerol 3-phosphate + 5-amino-1-(5-phospho-beta-D-ribosyl)imidazole-4-carboxamide + L-glutamate + H(+). The protein operates within amino-acid biosynthesis; L-histidine biosynthesis; L-histidine from 5-phospho-alpha-D-ribose 1-diphosphate: step 5/9. In terms of biological role, IGPS catalyzes the conversion of PRFAR and glutamine to IGP, AICAR and glutamate. The HisF subunit catalyzes the cyclization activity that produces IGP and AICAR from PRFAR using the ammonia provided by the HisH subunit. This chain is Imidazole glycerol phosphate synthase subunit HisF, found in Azobacteroides pseudotrichonymphae genomovar. CFP2.